A 199-amino-acid polypeptide reads, in one-letter code: Recombination protein RecR (199 aa).

Residues 58–73 form a C4-type zinc finger; it reads CSVCYGLADSDPCHIC. The Toprim domain occupies 81-176; it reads DVVCVVEQGT…KITRIASGVP (96 aa).

It belongs to the RecR family.

Functionally, may play a role in DNA repair. It seems to be involved in an RecBC-independent recombinational process of DNA repair. It may act with RecF and RecO. This is Recombination protein RecR from Desulfatibacillum aliphaticivorans.